Here is a 123-residue protein sequence, read N- to C-terminus: Large ribosomal subunit protein uL14c (123 aa).

The protein belongs to the universal ribosomal protein uL14 family. In terms of assembly, part of the 50S ribosomal subunit.

It localises to the plastid. The protein resides in the chloroplast. In terms of biological role, binds to 23S rRNA. The protein is Large ribosomal subunit protein uL14c of Saccharum hybrid (Sugarcane).